Here is a 582-residue protein sequence, read N- to C-terminus: 2-isopropylmalate synthase (582 aa).

The Pyruvate carboxyltransferase domain occupies 40-314; the sequence is PRWCAVDLRD…DPMIDFSDID (275 aa). Mg(2+)-binding residues include Asp-49, His-253, His-255, and Asn-289. A regulatory domain region spans residues 456 to 582; that stretch reads SPAGHPGGQW…NRAIRDNQVD (127 aa).

It belongs to the alpha-IPM synthase/homocitrate synthase family. LeuA type 2 subfamily. In terms of assembly, homodimer. The cofactor is Mg(2+).

The protein resides in the cytoplasm. The catalysed reaction is 3-methyl-2-oxobutanoate + acetyl-CoA + H2O = (2S)-2-isopropylmalate + CoA + H(+). The protein operates within amino-acid biosynthesis; L-leucine biosynthesis; L-leucine from 3-methyl-2-oxobutanoate: step 1/4. Its function is as follows. Catalyzes the condensation of the acetyl group of acetyl-CoA with 3-methyl-2-oxobutanoate (2-ketoisovalerate) to form 3-carboxy-3-hydroxy-4-methylpentanoate (2-isopropylmalate). In Renibacterium salmoninarum (strain ATCC 33209 / DSM 20767 / JCM 11484 / NBRC 15589 / NCIMB 2235), this protein is 2-isopropylmalate synthase.